Reading from the N-terminus, the 515-residue chain is Maturase K (515 aa).

Belongs to the intron maturase 2 family. MatK subfamily.

Its subcellular location is the plastid. The protein resides in the chloroplast. In terms of biological role, usually encoded in the trnK tRNA gene intron. Probably assists in splicing its own and other chloroplast group II introns. The protein is Maturase K of Pinus luchuensis (Ryukyu island pine).